The following is a 318-amino-acid chain: D-alanine--D-alanine ligase (318 aa).

The ATP-grasp domain occupies 101–307 (KKIIQYEGLP…FPDLIEKLVE (207 aa)). 135–190 (CREMGLPLVVKAPTQGSTIGMSFVHKEEDMAGALELAYDYDPVALVEQFIRGTEVT) serves as a coordination point for ATP. Residues D261, E274, and N276 each coordinate Mg(2+).

This sequence belongs to the D-alanine--D-alanine ligase family. Requires Mg(2+) as cofactor. The cofactor is Mn(2+).

Its subcellular location is the cytoplasm. The enzyme catalyses 2 D-alanine + ATP = D-alanyl-D-alanine + ADP + phosphate + H(+). Its pathway is cell wall biogenesis; peptidoglycan biosynthesis. Functionally, cell wall formation. This Pelotomaculum thermopropionicum (strain DSM 13744 / JCM 10971 / SI) protein is D-alanine--D-alanine ligase.